Here is a 418-residue protein sequence, read N- to C-terminus: Glutamyl-tRNA reductase (418 aa).

Substrate is bound by residues threonine 49–arginine 52, serine 109, glutamate 114–glutamine 116, and glutamine 120. The active-site Nucleophile is cysteine 50. Residue glycine 189–isoleucine 194 coordinates NADP(+).

It belongs to the glutamyl-tRNA reductase family. As to quaternary structure, homodimer.

It carries out the reaction (S)-4-amino-5-oxopentanoate + tRNA(Glu) + NADP(+) = L-glutamyl-tRNA(Glu) + NADPH + H(+). Its pathway is porphyrin-containing compound metabolism; protoporphyrin-IX biosynthesis; 5-aminolevulinate from L-glutamyl-tRNA(Glu): step 1/2. In terms of biological role, catalyzes the NADPH-dependent reduction of glutamyl-tRNA(Glu) to glutamate 1-semialdehyde (GSA). The sequence is that of Glutamyl-tRNA reductase from Shigella dysenteriae serotype 1 (strain Sd197).